The sequence spans 339 residues: UDP-N-acetylenolpyruvoylglucosamine reductase (339 aa).

Residues 16 to 188 form the FAD-binding PCMH-type domain; sequence GIAATARYYS…LQVTLRLNKQ (173 aa). The active site involves R164. The Proton donor role is filled by S238. Residue E334 is part of the active site.

It belongs to the MurB family. FAD serves as cofactor.

It localises to the cytoplasm. The catalysed reaction is UDP-N-acetyl-alpha-D-muramate + NADP(+) = UDP-N-acetyl-3-O-(1-carboxyvinyl)-alpha-D-glucosamine + NADPH + H(+). It functions in the pathway cell wall biogenesis; peptidoglycan biosynthesis. In terms of biological role, cell wall formation. This Amoebophilus asiaticus (strain 5a2) protein is UDP-N-acetylenolpyruvoylglucosamine reductase.